A 151-amino-acid polypeptide reads, in one-letter code: Large-conductance mechanosensitive channel (151 aa).

2 helical membrane passes run 19-39 (VGIIIGGAFTGIVKSLVGDVL) and 85-105 (GLFINAFISFVIMAVAVFFLV).

Belongs to the MscL family. Homopentamer.

The protein resides in the cell inner membrane. Functionally, channel that opens in response to stretch forces in the membrane lipid bilayer. May participate in the regulation of osmotic pressure changes within the cell. The sequence is that of Large-conductance mechanosensitive channel from Chlorobaculum parvum (strain DSM 263 / NCIMB 8327) (Chlorobium vibrioforme subsp. thiosulfatophilum).